The sequence spans 180 residues: Negative modulator of initiation of replication (180 aa).

Interaction with DNA stretches follow at residues 86–87 (AV), 115–119 (RTRVY), and 149–155 (NTNTGRK).

The protein belongs to the SeqA family. In terms of assembly, homodimer. Polymerizes to form helical filaments.

It is found in the cytoplasm. In terms of biological role, negative regulator of replication initiation, which contributes to regulation of DNA replication and ensures that replication initiation occurs exactly once per chromosome per cell cycle. Binds to pairs of hemimethylated GATC sequences in the oriC region, thus preventing assembly of replication proteins and re-initiation at newly replicated origins. Repression is relieved when the region becomes fully methylated. This is Negative modulator of initiation of replication from Enterobacter sp. (strain 638).